Reading from the N-terminus, the 283-residue chain is Trafficking protein particle complex subunit 31 (283 aa).

Positions 1 to 16 (MSQRIIQPSASDQQFP) are enriched in polar residues. 2 disordered regions span residues 1-20 (MSQRIIQPSASDQQFPGKSD) and 126-156 (SSKLSNASNSPGMLANSSTATSASANERLQE). The segment covering 126 to 151 (SSKLSNASNSPGMLANSSTATSASAN) has biased composition (low complexity).

It belongs to the TRAPP small subunits family. BET3 subfamily. In terms of assembly, part of the multisubunit TRAPP (transport protein particle) I complex composed of BET3, BET5, TRS20, TRS23, TRS31 and TRS33. Part of the multisubunit TRAPP (transport protein particle) II complex composed of BET3, BET5, TRS20, TRS23, TRS31, TRS33, TRS65, TRS85, TRS120 and TRS130. Part of the multisubunit TRAPP (transport protein particle) III complex composed of BET3, BET5, TRS20, TRS23, TRS31, TRS33 and TRS85.

The protein localises to the golgi apparatus. It is found in the cis-Golgi network. Its subcellular location is the endoplasmic reticulum. It localises to the preautophagosomal structure. In terms of biological role, component of the TRAPP I, TRAPP II and TRAPP III complexes which act as guanine nucleotide exchange factors (GEF) for YPT1. TRAPP I plays a key role in the late stages of endoplasmic reticulum to Golgi traffic. TRAPP II plays a role in intra-Golgi transport. TRAPP III plays a role in autophagosome formation. The protein is Trafficking protein particle complex subunit 31 (TRS31) of Saccharomyces cerevisiae (strain ATCC 204508 / S288c) (Baker's yeast).